Reading from the N-terminus, the 402-residue chain is S-adenosylmethionine synthase (402 aa).

Position 137–142 (137–142) interacts with ATP; sequence GQGSAD.

It belongs to the AdoMet synthase 2 family. It depends on Mg(2+) as a cofactor.

The enzyme catalyses L-methionine + ATP + H2O = S-adenosyl-L-methionine + phosphate + diphosphate. Its pathway is amino-acid biosynthesis; S-adenosyl-L-methionine biosynthesis; S-adenosyl-L-methionine from L-methionine: step 1/1. Its function is as follows. Catalyzes the formation of S-adenosylmethionine from methionine and ATP. The polypeptide is S-adenosylmethionine synthase (Pyrobaculum aerophilum (strain ATCC 51768 / DSM 7523 / JCM 9630 / CIP 104966 / NBRC 100827 / IM2)).